Here is a 183-residue protein sequence, read N- to C-terminus: Photosystem I assembly protein Ycf4 (183 aa).

The next 2 helical transmembrane spans lie at 17 to 39 (NYLL…FLSY) and 59 to 81 (FIPQ…IYIY).

Belongs to the Ycf4 family.

It localises to the plastid. It is found in the chloroplast thylakoid membrane. Functionally, seems to be required for the assembly of the photosystem I complex. This Cyanidium caldarium (Red alga) protein is Photosystem I assembly protein Ycf4.